Reading from the N-terminus, the 444-residue chain is MIAAPLDAVADSKGKKPFYTHLYVQVLAAIAAGILLGHFYPEFGTQLKPLGDAFIKLVKMIIAPVIFLTVATGIAGMSDLQKVGRVAGKAMLYFLTFSTLALIIGLIVANVVQPGAGMNIDPASLDPAAVAGYAAKAHEQSIVGFLTNIIPTTIVGAFADGDILQVLFFSVLFGIALAMVGEKSEPVVNFLNALTAPVFKLVAILMKAAPIGAFGAMAFTIGKYGVGSIANLAMLIGTFYITSLLFVLVVLGAVARYNGFSIVALLRYIKEELLLVLGTSSSEAALPGLMNKMEKAGCKRSVVGLVIPTGYSFNLDGTNIYMTLAALFIAQATGIQLSWGDQILLLLVAMLSSKGAAGITGAGFITLAATLSVVPSVPVAGMALILGIDRFMSECRALTNLVGNAVATIVVARWENELDTAQLAAALGGQTGEMAPAGGLQPAE.

9 helical membrane passes run 17-37 (PFYT…ILLG), 57-77 (LVKM…IAGM), 92-112 (LYFL…ANVV), 139-159 (EQSI…GAFA), 161-181 (GDIL…AMVG), 201-221 (LVAI…AFTI), 234-254 (MLIG…LGAV), 320-340 (IYMT…LSWG), and 368-388 (AATL…ILGI).

This sequence belongs to the dicarboxylate/amino acid:cation symporter (DAACS) (TC 2.A.23) family.

Its subcellular location is the cell inner membrane. In terms of biological role, responsible for the transport of dicarboxylates such as succinate, fumarate, and malate from the periplasm across the membrane. This is C4-dicarboxylate transport protein from Rhizobium johnstonii (strain DSM 114642 / LMG 32736 / 3841) (Rhizobium leguminosarum bv. viciae).